A 215-amino-acid polypeptide reads, in one-letter code: Leucyl/phenylalanyl-tRNA--protein transferase (215 aa).

The protein belongs to the L/F-transferase family.

The protein resides in the cytoplasm. The enzyme catalyses N-terminal L-lysyl-[protein] + L-leucyl-tRNA(Leu) = N-terminal L-leucyl-L-lysyl-[protein] + tRNA(Leu) + H(+). It carries out the reaction N-terminal L-arginyl-[protein] + L-leucyl-tRNA(Leu) = N-terminal L-leucyl-L-arginyl-[protein] + tRNA(Leu) + H(+). The catalysed reaction is L-phenylalanyl-tRNA(Phe) + an N-terminal L-alpha-aminoacyl-[protein] = an N-terminal L-phenylalanyl-L-alpha-aminoacyl-[protein] + tRNA(Phe). Functions in the N-end rule pathway of protein degradation where it conjugates Leu, Phe and, less efficiently, Met from aminoacyl-tRNAs to the N-termini of proteins containing an N-terminal arginine or lysine. In Campylobacter jejuni subsp. jejuni serotype O:2 (strain ATCC 700819 / NCTC 11168), this protein is Leucyl/phenylalanyl-tRNA--protein transferase.